Consider the following 339-residue polypeptide: Undecaprenyl-phosphate 4-deoxy-4-formamido-L-arabinose transferase (339 aa).

The next 2 membrane-spanning stretches (helical) occupy residues 235 to 255 (LSLVGGGMALAGFLFALFLLV) and 269 to 289 (LFVLFAVLFMFSGVQLLGMGL).

It belongs to the glycosyltransferase 2 family.

The protein resides in the cell inner membrane. The catalysed reaction is UDP-4-deoxy-4-formamido-beta-L-arabinose + di-trans,octa-cis-undecaprenyl phosphate = 4-deoxy-4-formamido-alpha-L-arabinopyranosyl di-trans,octa-cis-undecaprenyl phosphate + UDP. It functions in the pathway glycolipid biosynthesis; 4-amino-4-deoxy-alpha-L-arabinose undecaprenyl phosphate biosynthesis; 4-amino-4-deoxy-alpha-L-arabinose undecaprenyl phosphate from UDP-4-deoxy-4-formamido-beta-L-arabinose and undecaprenyl phosphate: step 1/2. Its pathway is bacterial outer membrane biogenesis; lipopolysaccharide biosynthesis. Catalyzes the transfer of 4-deoxy-4-formamido-L-arabinose from UDP to undecaprenyl phosphate. The modified arabinose is attached to lipid A and is required for resistance to polymyxin and cationic antimicrobial peptides. This is Undecaprenyl-phosphate 4-deoxy-4-formamido-L-arabinose transferase from Pseudomonas aeruginosa (strain LESB58).